Consider the following 348-residue polypeptide: Lipopolysaccharide heptosyltransferase 2 (348 aa).

The protein belongs to the glycosyltransferase 9 family.

The catalysed reaction is an L-alpha-D-Hep-(1-&gt;5)-[alpha-Kdo-(2-&gt;4)]-alpha-Kdo-(2-&gt;6)-lipid A + ADP-L-glycero-beta-D-manno-heptose = an L-alpha-D-Hep-(1-&gt;3)-L-alpha-D-Hep-(1-&gt;5)-[alpha-Kdo-(2-&gt;4)]-alpha-Kdo-(2-&gt;6)-lipid A + ADP + H(+). The protein operates within bacterial outer membrane biogenesis; LPS core biosynthesis. Glycosyltransferase involved in the biosynthesis of the core oligosaccharide region of lipopolysaccharide (LPS). Catalyzes the addition of the second heptose unit to the heptosyl-Kdo2-lipid A module. This is Lipopolysaccharide heptosyltransferase 2 from Salmonella typhimurium (strain LT2 / SGSC1412 / ATCC 700720).